The chain runs to 723 residues: Translation initiation factor IF-2 (723 aa).

The disordered stretch occupies residues 112-138 (KIFNNKKNKKQKPQQAPQQEVQKKKEK). The segment covering 114–123 (FNNKKNKKQK) has biased composition (basic residues). Residues 224–393 (ERPPVVTIMG…LLVSEMEELK (170 aa)) enclose the tr-type G domain. The tract at residues 233-240 (GHVDHGKT) is G1. 233–240 (GHVDHGKT) is a binding site for GTP. The interval 258-262 (GITQH) is G2. A G3 region spans residues 279 to 282 (DTPG). Residues 279 to 283 (DTPGH) and 333 to 336 (NKID) each bind GTP. A G4 region spans residues 333–336 (NKID). The tract at residues 369 to 371 (SAL) is G5.

It belongs to the TRAFAC class translation factor GTPase superfamily. Classic translation factor GTPase family. IF-2 subfamily.

It is found in the cytoplasm. Its function is as follows. One of the essential components for the initiation of protein synthesis. Protects formylmethionyl-tRNA from spontaneous hydrolysis and promotes its binding to the 30S ribosomal subunits. Also involved in the hydrolysis of GTP during the formation of the 70S ribosomal complex. This Anoxybacillus flavithermus (strain DSM 21510 / WK1) protein is Translation initiation factor IF-2.